The primary structure comprises 188 residues: Inner membrane-spanning protein YciB (188 aa).

5 consecutive transmembrane segments (helical) span residues 22 to 42 (IYIA…VTWM), 50 to 70 (MTLV…VFHN), 72 to 92 (LFIK…LLVS), 121 to 141 (FAWA…AFWL), and 149 to 169 (FKVF…GVYI).

Belongs to the YciB family.

It is found in the cell inner membrane. Functionally, plays a role in cell envelope biogenesis, maintenance of cell envelope integrity and membrane homeostasis. The protein is Inner membrane-spanning protein YciB of Pectobacterium carotovorum subsp. carotovorum (strain PC1).